The chain runs to 2243 residues: Zinc finger FYVE domain-containing protein 26 homolog (2243 aa).

Disordered stretches follow at residues 386–416 (SQRKGEDGENDEEDDEQYVDDDVASPPRPTA) and 514–556 (KKKA…GKAS). Positions 393–408 (GENDEEDDEQYVDDDV) are enriched in acidic residues. Y403 bears the Phosphotyrosine mark. The span at 517-528 (ASSDDESRERSN) shows a compositional bias: basic and acidic residues. Basic residues predominate over residues 534–543 (NRRKARRQRR). One copy of the LRR 1 repeat lies at 617 to 644 (KKIIETFHLEHSQLNRELHFMEQQQLVK). S1424 carries the phosphoserine modification. The FYVE-type zinc finger occupies 1444-1500 (DEEASHCMCCRRAAFTMLMRRHHCRRCGRVVCYACSTHRIRIPELYDELEVRICNDC). Residues C1450, C1453, C1467, C1470, C1475, C1478, C1497, and C1500 each coordinate Zn(2+). The segment at 1505-1534 (TPAKDQGDGTSSERSAISGQVSKSSGRSDS) is disordered. A compositionally biased stretch (polar residues) spans 1512-1534 (DGTSSERSAISGQVSKSSGRSDS). An LRR 2 repeat occupies 1887-1912 (YPQLANGGLNVLMDELQQLDDAQFTA).

Belongs to the ZFYVE26 family.

Its function is as follows. Phosphatidylinositol 3-phosphate (PtdIns[3]P)-binding protein. Involved in autophagy. The sequence is that of Zinc finger FYVE domain-containing protein 26 homolog from Drosophila melanogaster (Fruit fly).